Reading from the N-terminus, the 248-residue chain is Triosephosphate isomerase (248 aa).

9-11 (NWK) contributes to the substrate binding site. Residue histidine 92 is the Electrophile of the active site. Residue glutamate 164 is the Proton acceptor of the active site. Substrate is bound by residues glycine 170, serine 210, and 231–232 (GG).

Belongs to the triosephosphate isomerase family. As to quaternary structure, homodimer.

The protein resides in the cytoplasm. It catalyses the reaction D-glyceraldehyde 3-phosphate = dihydroxyacetone phosphate. Its pathway is carbohydrate biosynthesis; gluconeogenesis. It functions in the pathway carbohydrate degradation; glycolysis; D-glyceraldehyde 3-phosphate from glycerone phosphate: step 1/1. Involved in the gluconeogenesis. Catalyzes stereospecifically the conversion of dihydroxyacetone phosphate (DHAP) to D-glyceraldehyde-3-phosphate (G3P). The sequence is that of Triosephosphate isomerase from Mycoplasma capricolum subsp. capricolum (strain California kid / ATCC 27343 / NCTC 10154).